The following is a 248-amino-acid chain: Small ribosomal subunit protein eS6 (248 aa).

The disordered stretch occupies residues 213 to 248 (LLAQRKKESKAKREEAKRRRSASMRESKSSISSDKK). Over residues 223–248 (AKREEAKRRRSASMRESKSSISSDKK) the composition is skewed to basic and acidic residues.

This sequence belongs to the eukaryotic ribosomal protein eS6 family. As to quaternary structure, component of the small ribosomal subunit. Part of the small subunit (SSU) processome, composed of more than 70 proteins and the RNA chaperone small nucleolar RNA (snoRNA) U3. Post-translationally, ribosomal protein S6 is the major substrate of protein kinases in eukaryote ribosomes.

It localises to the cytoplasm. The protein localises to the nucleus. It is found in the nucleolus. Its function is as follows. Component of the 40S small ribosomal subunit. Plays an important role in controlling cell growth and proliferation through the selective translation of particular classes of mRNA. Part of the small subunit (SSU) processome, first precursor of the small eukaryotic ribosomal subunit. During the assembly of the SSU processome in the nucleolus, many ribosome biogenesis factors, an RNA chaperone and ribosomal proteins associate with the nascent pre-rRNA and work in concert to generate RNA folding, modifications, rearrangements and cleavage as well as targeted degradation of pre-ribosomal RNA by the RNA exosome. In Glossina morsitans morsitans (Savannah tsetse fly), this protein is Small ribosomal subunit protein eS6 (RpS6).